Consider the following 194-residue polypeptide: WASH complex subunit 3 (194 aa).

At Met-1 the chain carries N-acetylmethionine. A coiled-coil region spans residues 46–74 (TVCEEKLADLSLRIQQIETTLNILDAKLS). The segment covering 98-123 (THSEATSEQSQQNSLQDSGPQESEVT) has biased composition (polar residues). Disordered regions lie at residues 98–125 (THSE…VTPE) and 158–194 (SEGL…SFSD).

This sequence belongs to the CCDC53 family. As to quaternary structure, component of the WASH core complex also described as WASH regulatory complex (SHRC) composed of WASHC1, WASHC2, WASHC3, WASHC4 and WASHC5. The WASH core complex associates via WASHC2 with the F-actin-capping protein dimer (formed by CAPZA1, CAPZA2 or CAPZA3 and CAPZB) in a transient or substoichiometric manner which was initially described as WASH complex.

It is found in the early endosome. Functionally, acts as a component of the WASH core complex that functions as a nucleation-promoting factor (NPF) at the surface of endosomes, where it recruits and activates the Arp2/3 complex to induce actin polymerization, playing a key role in the fission of tubules that serve as transport intermediates during endosome sorting. The protein is WASH complex subunit 3 of Bos taurus (Bovine).